Here is a 102-residue protein sequence, read N- to C-terminus: Exocrine gland-secreted peptide 1 (102 aa).

A signal peptide spans 1–22 (MTSLPVLLFLIILLLPSMITEG). Cysteines 63 and 95 form a disulfide.

This sequence belongs to the exocrine gland-secreted peptide family. As to quaternary structure, monomer. In terms of tissue distribution, expressed in the extraorbital lacrimal gland from where it is secreted into tears.

The protein localises to the secreted. Male-specific phermone which is recognized by the Vmn2r116/V2rp5 receptor in the vomeronasal organ (VNO) and enhances female sexual receptive behavior (lordosis) upon male mounting, resulting in successful copulation. In Mus musculus (Mouse), this protein is Exocrine gland-secreted peptide 1.